Consider the following 344-residue polypeptide: tRNA N6-adenosine threonylcarbamoyltransferase (344 aa).

Fe cation is bound by residues H112 and H116. Residues 134 to 138, D167, G180, and N280 contribute to the substrate site; that span reads LASGG. D308 is a binding site for Fe cation.

Belongs to the KAE1 / TsaD family. Fe(2+) serves as cofactor.

Its subcellular location is the cytoplasm. The enzyme catalyses L-threonylcarbamoyladenylate + adenosine(37) in tRNA = N(6)-L-threonylcarbamoyladenosine(37) in tRNA + AMP + H(+). Required for the formation of a threonylcarbamoyl group on adenosine at position 37 (t(6)A37) in tRNAs that read codons beginning with adenine. Is involved in the transfer of the threonylcarbamoyl moiety of threonylcarbamoyl-AMP (TC-AMP) to the N6 group of A37, together with TsaE and TsaB. TsaD likely plays a direct catalytic role in this reaction. This Rickettsia rickettsii (strain Iowa) protein is tRNA N6-adenosine threonylcarbamoyltransferase.